We begin with the raw amino-acid sequence, 1690 residues long: Chromatin-remodeling ATPase INO80 (1690 aa).

Disordered regions lie at residues M1 to E306, Q395 to A527, and Q618 to A637. Polar residues-rich tracts occupy residues F30–P41 and S111–S127. Positions P213–S227 are enriched in low complexity. 5 stretches are compositionally biased toward basic and acidic residues: residues R253–M273, Q395–K407, E416–Q453, S513–A524, and K621–A635. A coiled-coil region spans residues A392–A468. The DBINO domain occupies I581–G706. A coiled-coil region spans residues Q623–E694. A Helicase ATP-binding domain is found at V830 to T1002. D843–T850 contributes to the ATP binding site. Residues D953–Q956 carry the DEAQ box motif. In terms of domain architecture, Helicase C-terminal spans K1403–E1563. Positions Y1619 to M1690 are disordered. The span at K1656–K1672 shows a compositional bias: basic residues. The segment covering T1673–D1682 has biased composition (basic and acidic residues).

This sequence belongs to the SNF2/RAD54 helicase family. As to quaternary structure, component of the INO80 chromatin-remodeling complex.

Its subcellular location is the nucleus. It carries out the reaction ATP + H2O = ADP + phosphate + H(+). Its function is as follows. ATPase component of the INO80 complex which remodels chromatin by shifting nucleosomes and is involved in DNA repair. This Aspergillus terreus (strain NIH 2624 / FGSC A1156) protein is Chromatin-remodeling ATPase INO80 (ino80).